The sequence spans 305 residues: tRNA uridine(34) hydroxylase (305 aa).

The 95-residue stretch at 125 to 219 (ADENTVVVDT…YLEEVPREQS (95 aa)) folds into the Rhodanese domain. Catalysis depends on Cys179, which acts as the Cysteine persulfide intermediate.

It belongs to the TrhO family.

It catalyses the reaction uridine(34) in tRNA + AH2 + O2 = 5-hydroxyuridine(34) in tRNA + A + H2O. In terms of biological role, catalyzes oxygen-dependent 5-hydroxyuridine (ho5U) modification at position 34 in tRNAs. This Brucella canis (strain ATCC 23365 / NCTC 10854 / RM-666) protein is tRNA uridine(34) hydroxylase.